The sequence spans 344 residues: Ferrochelatase (344 aa).

Residues H196 and E277 each coordinate Fe cation.

Belongs to the ferrochelatase family.

It is found in the cytoplasm. The enzyme catalyses heme b + 2 H(+) = protoporphyrin IX + Fe(2+). It participates in porphyrin-containing compound metabolism; protoheme biosynthesis; protoheme from protoporphyrin-IX: step 1/1. Its function is as follows. Catalyzes the ferrous insertion into protoporphyrin IX. The protein is Ferrochelatase of Synechococcus sp. (strain JA-2-3B'a(2-13)) (Cyanobacteria bacterium Yellowstone B-Prime).